The chain runs to 562 residues: Formate--tetrahydrofolate ligase (562 aa).

71-78 contacts ATP; the sequence is TPAGEGKS.

The protein belongs to the formate--tetrahydrofolate ligase family.

The enzyme catalyses (6S)-5,6,7,8-tetrahydrofolate + formate + ATP = (6R)-10-formyltetrahydrofolate + ADP + phosphate. The protein operates within one-carbon metabolism; tetrahydrofolate interconversion. The protein is Formate--tetrahydrofolate ligase of Bacillus cereus (strain G9842).